The primary structure comprises 658 residues: MGNVQSEPSAGGGSRKEQASDRASDSRRTPLVEPEVTPSSPAMRLARGLGVWFPGSSGPPGLLIPPESQASSSTLPLTLELPSPVTPPPEEAAAAAVSTPPPPPVGTLLPAPSKWRKPTGTAVPRIRGLLEASHRGQGDPPSLRPLPPLPRQLTEKDPVLRAPAPPPTPLEPRKQLPPAPSTCDPQPPSRRITLASSATSPTESQVRHSSEGQAAGGAHGEGEMARSATSESGLSLLCKVTFKSGPHLSPTSSSGPLAAKASLGASGGGGLFASSGAISYAEVLKQGPQPPGATRPLGEGPRAAQETEGGDGDGEGCSGPPSVPTPLARALPPPPYTTFPGSKPKFDWVSPPDGTERHFRFNGAVGGIGAPRRRTTTLSGPWGSPPPRSGQTHPSSGPRRPTPALLAPPMFIFPAPNNGEPVRPVPPSPQQIPPLPPPPPTPPATPPPAPPPTPQPPALPRTPILVARPPTPGPGHLESALAPTPPSTLSPTAAAEQAPAPTPAPVTSQVPATTTAELSPPMPQPKIRTRRNKGPRAARGVIREEGTSGDGPREPNMAPVTDSSSGGGGGGSNGTSTAGASNKGTARHWPPFEVLNSCPCKCYCRHQRRHRRLPRNVSAWLSTPTNHLSEPPWVATVKLAGSLVAGLEHYDLQATHST.

2 disordered regions span residues 1–268 (MGNV…ASGG) and 285–584 (KQGP…SNKG). Basic and acidic residues predominate over residues 14 to 30 (SRKEQASDRASDSRRTP). The segment covering 54-83 (PGSSGPPGLLIPPESQASSSTLPLTLELPS) has biased composition (low complexity). The tract at residues 127–491 (RGLLEASHRG…APTPPSTLSP (365 aa)) is interaction with GGNBP1. Over residues 163–188 (PAPPPTPLEPRKQLPPAPSTCDPQPP) the composition is skewed to pro residues. The segment covering 194 to 204 (LASSATSPTES) has biased composition (polar residues). Positions 252-264 (SSSGPLAAKASLG) are enriched in low complexity. Ser-384 carries the phosphoserine modification. Residues 398–409 (PRRPTPALLAPP) show a composition bias toward low complexity. Pro residues predominate over residues 423 to 460 (RPVPPSPQQIPPLPPPPPTPPATPPPAPPPTPQPPALP). The segment covering 489–516 (LSPTAAAEQAPAPTPAPVTSQVPATTTA) has biased composition (low complexity). The tract at residues 496–658 (EQAPAPTPAP…HYDLQATHST (163 aa)) is interactions with ZNF403/GGNBP2 and OAZ3. The segment covering 527-536 (IRTRRNKGPR) has biased composition (basic residues).

Interacts with FANCL, GGNBP1 and ZNF403/GGNBP2.

May be involved in spermatogenesis. This chain is Gametogenetin (Ggn), found in Rattus norvegicus (Rat).